The sequence spans 522 residues: MPGSLPVNTESCWPKDVGIVALEIYFPSQYVDQTELEKYDGVDAGKYTIGLGQSKMGFCSDREDINSLCLTVVQKLMERNSLSYDCIGRLEVGTETIIDKSKSVKTVLMQLFEESGNTDVEGIDTTNACYGGTAALFNAINWIESSSWDGRYALVVAGDIAVYATGNARPTGGAGAVAMLVGSNAPLIFERGLRGTHMQHAYDFYKPDMVSEYPVVDGKLSIQCYLSALDRCYSVYRNKIHAQWQKEGTDRGFTLNDFGFMIFHSPYCKLVQKSVARLLLNDFLSDQNAETANGVFSGLEAFRDVKLEDTYFDRDVEKAFMKASAELFNQKTKASLLVSNQNGNMYTPSVYGCLASLLAQYSPEHLAGQRISEFSYGSGFAATLYSIRVTQDATPGSALDKITASLSDLKARLDSRKCIAPDVFAENMKIRQETHHLANYIPQCSVEDLFEGTWYLVRVDEKHRRTYARRPVMGDGPLEAGVEVVHPGIVHEHIPSPAKKVPRIPATTESEGVTVAISNGVH.

2 residues coordinate (3S)-3-hydroxy-3-methylglutaryl-CoA: Asp-43 and Ala-44. The Proton donor/acceptor role is filled by Glu-95. The (3S)-3-hydroxy-3-methylglutaryl-CoA site is built by Cys-129, Asn-167, Thr-171, Ser-221, His-264, Lys-273, Asn-344, and Ser-378. Cys-129 functions as the Acyl-thioester intermediate in the catalytic mechanism. His-264 (proton donor/acceptor) is an active-site residue.

The protein belongs to the thiolase-like superfamily. HMG-CoA synthase family. Homodimer.

It localises to the cytoplasm. The enzyme catalyses acetoacetyl-CoA + acetyl-CoA + H2O = (3S)-3-hydroxy-3-methylglutaryl-CoA + CoA + H(+). Its pathway is metabolic intermediate biosynthesis; (R)-mevalonate biosynthesis; (R)-mevalonate from acetyl-CoA: step 2/3. Its function is as follows. Catalyzes the condensation of acetyl-CoA with acetoacetyl-CoA to form HMG-CoA, which is converted by HMG-CoA reductase (HMGCR) into mevalonate, a precursor for cholesterol synthesis. This is Hydroxymethylglutaryl-CoA synthase, cytoplasmic (HMGCS1) from Gallus gallus (Chicken).